The sequence spans 354 residues: E2F transcription factor-like E2FF (354 aa).

Residues 21–86 mediate DNA binding; it reads RKEKSLGVLV…RGKNQYSWKG (66 aa). Residues 104–143 form a disordered region; that stretch reads ERLGYSSSNNSDKVSNGCEREEPLTLTPDDQENSSSSKMD. Residues 108-117 are compositionally biased toward polar residues; that stretch reads YSSSNNSDKV. Residues 145 to 225 mediate DNA binding; it reads KKEKSLWLLA…TRKPAYRWLG (81 aa).

The protein belongs to the E2F/DP family. In terms of tissue distribution, high expression in young cotyledons and leaves, hypocotyls, shoot apical meristem, roots and mature pollen grains, moderate in developing trichomes, flowers and at early stages of developing anthers, and barely detectable in mature leaves. Not detected in primary root meristem, emerging lateral roots, pistils, developing embryos and siliques.

The protein localises to the nucleus. The protein resides in the cytoplasm. In terms of biological role, inhibitor of E2F-dependent activation of gene expression. Binds specifically the E2 recognition site without interacting with DP proteins and prevents transcription activation by E2F/DP heterodimers. Does not bind retinoblastoma-related proteins. Acts as a growth regulator but is not associated with changes in the expression of cell cycle marker genes or in nuclear ploidy levels. Has no effect on cell proliferation, but may repress cell wall biosynthesis genes during cell elongation in differentiated cells. The chain is E2F transcription factor-like E2FF (E2FF) from Arabidopsis thaliana (Mouse-ear cress).